The chain runs to 359 residues: Aminomethyltransferase (359 aa).

This sequence belongs to the GcvT family. The glycine cleavage system is composed of four proteins: P, T, L and H.

It carries out the reaction N(6)-[(R)-S(8)-aminomethyldihydrolipoyl]-L-lysyl-[protein] + (6S)-5,6,7,8-tetrahydrofolate = N(6)-[(R)-dihydrolipoyl]-L-lysyl-[protein] + (6R)-5,10-methylene-5,6,7,8-tetrahydrofolate + NH4(+). The glycine cleavage system catalyzes the degradation of glycine. This chain is Aminomethyltransferase, found in Alcanivorax borkumensis (strain ATCC 700651 / DSM 11573 / NCIMB 13689 / SK2).